The chain runs to 434 residues: Probable phosphatidylinositol 3,4,5-trisphosphate 3-phosphatase TEP1 (434 aa).

Residues 33–255 form the Phosphatase tensin-type domain; that stretch reads KTKNDIGLRL…RYHEFFITHE (223 aa). C193 (phosphocysteine intermediate) is an active-site residue.

It carries out the reaction a 1,2-diacyl-sn-glycero-3-phospho-(1D-myo-inositol-3,4,5-trisphosphate) + H2O = a 1,2-diacyl-sn-glycero-3-phospho-(1D-myo-inositol-4,5-bisphosphate) + phosphate. In terms of biological role, may act as a phosphoinositide 3-phosphatase by regulating PtdIns(3,4,5)P3 levels. The sequence is that of Probable phosphatidylinositol 3,4,5-trisphosphate 3-phosphatase TEP1 (TEP1) from Saccharomyces cerevisiae (strain ATCC 204508 / S288c) (Baker's yeast).